The following is a 397-amino-acid chain: Cathepsin E-A (397 aa).

An N-terminal signal peptide occupies residues M1–G16. Positions L17–Y52 are cleaved as a propeptide — activation peptide. A Peptidase A1 domain is found at Y74–A385. An N-linked (GlcNAc...) asparagine glycan is attached at N86. D92 is an active-site residue. C105 and C110 are joined by a disulfide. A glycan (N-linked (GlcNAc...) asparagine) is linked at N130. A disulfide bridge connects residues C268 and C272. D277 is an active-site residue. An intrachain disulfide couples C310 to C344.

Belongs to the peptidase A1 family. Homodimer; disulfide-linked. Glycosylated. Contains high mannose-type oligosaccharide. As to expression, expressed predominantly in the larval foregut and the anterior and posterior adult stomach.

It is found in the endosome. It catalyses the reaction Similar to cathepsin D, but slightly broader specificity.. May have a role in immune function. Probably involved in the processing of antigenic peptides during MHC class II-mediated antigen presentation. This is Cathepsin E-A (ctse-a) from Xenopus laevis (African clawed frog).